The primary structure comprises 631 residues: Chaperone protein DnaK (631 aa).

At Thr198 the chain carries Phosphothreonine; by autocatalysis. Residues 602–631 are disordered; the sequence is EAAGGAQQAGKDDVVDAEFTEVDDDKKKSA.

This sequence belongs to the heat shock protein 70 family.

Acts as a chaperone. The chain is Chaperone protein DnaK from Rhodopseudomonas palustris (strain ATCC BAA-98 / CGA009).